A 104-amino-acid chain; its full sequence is Large ribosomal subunit protein bL21 (104 aa).

It belongs to the bacterial ribosomal protein bL21 family. In terms of assembly, part of the 50S ribosomal subunit. Contacts protein L20.

Functionally, this protein binds to 23S rRNA in the presence of protein L20. In Lactococcus lactis subsp. cremoris (strain MG1363), this protein is Large ribosomal subunit protein bL21.